A 592-amino-acid polypeptide reads, in one-letter code: MRTPTTILLLVGAILFSGAGYVRSDASDHRYKEGDTVPLYANKVGPFHNPSETYRYFDLPFCIPEGVKEKKEALGEVLNGDRLVSAPYKLNFRDEKESEVYCNKKLSKEEVKQFRKAVEKDYYFQMYYDDLPIWGFIGKVDKDIKSDPSEFKYFLYKHIQFEILYNKDRVIEISARMDPHSLVDLTEDKEVDAEFMYTVKWKETETPFEKRMEKYSMSSSLPHHLEIHWFSIINSCVTVLLLTGFLATILMRVLKNDFMKYAQDEEAADDQEETGWKYIHGDVFRFPTHNSLFAASLGSGTQLFTLTIFIFMLALVGVFYPYNRGALFTALVVIYALTSGIAGYTSASFYCQLEGKSWVRNLLLTGCLFCGPLFLTFCFLNTVAITYTATAALPFGTIVVIVLIWTLVTSPLLVLGGIAGKNSKAEFQAPCRTTKYPREIPPLPWYRSAIPQMAMAGFLPFSAIYIELYYIFASVWGHRIYTIYSILFIVFIILIIVTAFITVALTYFQLAAEDHQWWWRSFLCGGSTGLFIYAYCLYYYYARSDMSGFMQTSFFFGYMACICYGFFLMLGTVGFRAALLFVRHIYRSIKCE.

Residues 1–24 (MRTPTTILLLVGAILFSGAGYVRS) form the signal peptide. The Lumenal portion of the chain corresponds to 25–229 (DASDHRYKEG…SLPHHLEIHW (205 aa)). A helical transmembrane segment spans residues 230–250 (FSIINSCVTVLLLTGFLATIL). Over 251–302 (MRVLKNDFMKYAQDEEAADDQEETGWKYIHGDVFRFPTHNSLFAASLGSGTQ) the chain is Cytoplasmic. Residues 303–323 (LFTLTIFIFMLALVGVFYPYN) form a helical membrane-spanning segment. Arg-324 is a topological domain (lumenal). Residues 325-345 (GALFTALVVIYALTSGIAGYT) form a helical membrane-spanning segment. Residues 346 to 362 (SASFYCQLEGKSWVRNL) lie on the Cytoplasmic side of the membrane. The chain crosses the membrane as a helical span at residues 363–383 (LLTGCLFCGPLFLTFCFLNTV). Residues 384–397 (AITYTATAALPFGT) are Lumenal-facing. A helical membrane pass occupies residues 398–418 (IVVIVLIWTLVTSPLLVLGGI). Over 419–452 (AGKNSKAEFQAPCRTTKYPREIPPLPWYRSAIPQ) the chain is Cytoplasmic. The helical transmembrane segment at 453-473 (MAMAGFLPFSAIYIELYYIFA) threads the bilayer. Topologically, residues 474 to 485 (SVWGHRIYTIYS) are lumenal. The helical transmembrane segment at 486-506 (ILFIVFIILIIVTAFITVALT) threads the bilayer. Residues 507 to 521 (YFQLAAEDHQWWWRS) lie on the Cytoplasmic side of the membrane. A helical transmembrane segment spans residues 522 to 542 (FLCGGSTGLFIYAYCLYYYYA). Topologically, residues 543-553 (RSDMSGFMQTS) are lumenal. A helical membrane pass occupies residues 554 to 574 (FFFGYMACICYGFFLMLGTVG). At 575-592 (FRAALLFVRHIYRSIKCE) the chain is on the cytoplasmic side. Residues 581–586 (FVRHIY) carry the Endoplasmic reticulum export signal motif. Positions 590 to 592 (KCE) match the Golgi retention signal motif.

It belongs to the nonaspanin (TM9SF) (TC 9.A.2) family.

The protein resides in the endosome membrane. It is found in the golgi apparatus membrane. In Arabidopsis thaliana (Mouse-ear cress), this protein is Transmembrane 9 superfamily member 2.